Here is a 415-residue protein sequence, read N- to C-terminus: Tumor necrosis factor receptor superfamily member 3 (415 aa).

The first 30 residues, 1–30, serve as a signal peptide directing secretion; it reads MRLPRASSPCGLAWGPLLLGLSGLLVASQP. The Extracellular segment spans residues 31–223; the sequence is QLVPPYRIEN…NPPEPGAMLL (193 aa). N-linked (GlcNAc...) asparagine glycosylation occurs at N40. 4 TNFR-Cys repeats span residues 42–81, 82–124, 125–170, and 171–213; these read TCWD…TVCK, TCPH…KAEC, RCQP…VNCV, and PCKP…TICK. Disulfide bonds link C43/C58, C59/C72, C62/C80, C83/C98, C101/C116, C104/C124, C126/C132, C139/C150, C142/C169, and C172/C187. N179 carries N-linked (GlcNAc...) asparagine glycosylation. A helical membrane pass occupies residues 224-244; that stretch reads LAILLSLVLFLLFTTVLACAW. Over 245–415 the chain is Cytoplasmic; the sequence is MRHPSLCRKL…ETETLGCQDL (171 aa). The tract at residues 261–304 is disordered; that stretch reads HPEGEESPPCPAPRADPHFPDLAEPLLPMSGDLSPSPAGPPTAP. The residue at position 315 (S315) is a Phosphoserine. The segment at 361-399 is disordered; it reads LGGTRGPGDPPAPPEPPYPTPEEGAPGPSELSTPYQEDG. The span at 368-380 shows a compositional bias: pro residues; sequence GDPPAPPEPPYPT.

As to quaternary structure, self-associates; dimerization and trimerization are promoted by lymphotoxin (LTA(3)). Associates with TRAF3. Associates with TRAF4. Associates with TRAF5.

It localises to the membrane. In terms of biological role, receptor for the heterotrimeric lymphotoxin containing LTA and LTB, and for TNFS14/LIGHT. Activates NF-kappa-B signaling upon stimulation with lymphotoxin. Promotes apoptosis via TRAF3 and TRAF5. May play a role in the development of lymphoid organs. Functionally, (Microbial infection) Plays a role in host defense against Zika virus infection. The sequence is that of Tumor necrosis factor receptor superfamily member 3 (Ltbr) from Mus musculus (Mouse).